A 118-amino-acid polypeptide reads, in one-letter code: UPF0058 protein MJ1132 (118 aa).

The protein belongs to the UPF0058 family.

This is UPF0058 protein MJ1132 from Methanocaldococcus jannaschii (strain ATCC 43067 / DSM 2661 / JAL-1 / JCM 10045 / NBRC 100440) (Methanococcus jannaschii).